Here is a 1167-residue protein sequence, read N- to C-terminus: Integrin alpha-E (1167 aa).

The signal sequence occupies residues 1–19 (MKWLFHTLLCMASLKPQGA). Residues 20–1114 (FNLDVDWAWV…IFLKEEETRS (1095 aa)) are Extracellular-facing. FG-GAP repeat units lie at residues 27 to 81 (AWVT…PDEI) and 84 to 142 (QPVE…LQAQ). An N-linked (GlcNAc...) asparagine glycan is attached at Asn-51. 2 cysteine pairs are disulfide-bonded: Cys-72/Cys-83 and Cys-130/Cys-164. The X-domain (extra domain) stretch occupies residues 149–192 (EGFLDPGAHVDSGDYCRSKGGSTGEEKKSARRRRTVEEEDEEED). A disordered region spans residues 163–191 (YCRSKGGSTGEEKKSARRRRTVEEEDEEE). Residues 193-382 (GTEIAIVLDG…SKLQQHIVHM (190 aa)) enclose the VWFA domain. N-linked (GlcNAc...) asparagine glycosylation is found at Asn-256, Asn-314, Asn-341, Asn-364, Asn-418, and Asn-437. The FG-GAP 3 repeat unit spans residues 383–435 (EGTVGDALQYQLAQTGFSAQILDKGQVLLGTVGAFNWSGGALLYSTQNGRGCF). FG-GAP repeat units lie at residues 438–491 (QTAK…REED), 492–552 (AFVR…DASF), 555–619 (AHTL…GLYD), and 623–683 (QQIR…FTPD). The Ca(2+) site is built by Asp-514, Asp-516, Asp-518, Asp-522, Asp-578, Asn-580, Asp-582, Asp-586, Asp-646, Asn-648, Asp-650, and Asp-654. Cys-698 and Cys-754 are disulfide-bonded. N-linked (GlcNAc...) asparagine glycosylation is found at Asn-718 and Asn-773. A disulfide bond links Cys-814 and Cys-820. Asn-829 and Asn-846 each carry an N-linked (GlcNAc...) asparagine glycan. Cys-884 and Cys-898 are oxidised to a cystine. N-linked (GlcNAc...) asparagine glycans are attached at residues Asn-911, Asn-925, Asn-968, and Asn-1013. Intrachain disulfides connect Cys-998/Cys-1023 and Cys-1031/Cys-1047. Asn-1055 and Asn-1086 each carry an N-linked (GlcNAc...) asparagine glycan. Residues 1115–1137 (LPLIIGSSIGGLLVLVVIIAILF) traverse the membrane as a helical segment. At 1138–1167 (KCGFFKRKYQQLNLESTRRAQLKADSLLQD) the chain is on the cytoplasmic side. The GFFKR motif signature appears at 1140–1144 (GFFKR).

The protein belongs to the integrin alpha chain family. Heterodimer of an alpha and a beta subunit. The alpha subunit is composed of a heavy and a light chains linked by a disulfide bond. Alpha-E associates with beta-7.

It localises to the membrane. Its function is as follows. Integrin alpha-E/beta-7 is a receptor for E-cadherin. It mediates adhesion of intra-epithelial T-lymphocytes to epithelial cell monolayers. Mice expressing a null mutation of the alpha-E subunit gene exhibit a marked reduction in the numbers of intraepithelial lymphocytes in the gut and in the development of gut-associated lymphoid aggregates, supporting a specific role for this integrin in mediating retention of lymphocytes in the intestinal wall. The protein is Integrin alpha-E (Itgae) of Mus musculus (Mouse).